A 400-amino-acid chain; its full sequence is Phosphoglycerate kinase (400 aa).

Substrate-binding positions include 23–25 (DLN), Arg38, 61–64 (HFGR), Arg120, and Arg153. Residues Lys203, Glu325, and 355–358 (GGDT) each bind ATP.

It belongs to the phosphoglycerate kinase family. Monomer.

It localises to the cytoplasm. It catalyses the reaction (2R)-3-phosphoglycerate + ATP = (2R)-3-phospho-glyceroyl phosphate + ADP. It participates in carbohydrate degradation; glycolysis; pyruvate from D-glyceraldehyde 3-phosphate: step 2/5. The sequence is that of Phosphoglycerate kinase from Methylorubrum populi (strain ATCC BAA-705 / NCIMB 13946 / BJ001) (Methylobacterium populi).